The sequence spans 303 residues: Putative HTH-type transcriptional regulatory protein Mpal_0031 (303 aa).

One can recognise an HTH cro/C1-type domain in the interval 132-189 (LRGLREQRNMSLGDLGAVLGVSRRTISKYESGMGTTLEIAIKIEEVFDSGVIESIDLL). Residues 143 to 162 (LGDLGAVLGVSRRTISKYES) constitute a DNA-binding region (H-T-H motif).

The sequence is that of Putative HTH-type transcriptional regulatory protein Mpal_0031 from Methanosphaerula palustris (strain ATCC BAA-1556 / DSM 19958 / E1-9c).